Reading from the N-terminus, the 556-residue chain is Formate--tetrahydrofolate ligase (556 aa).

65–72 is a binding site for ATP; it reads TPAGEGKS.

It belongs to the formate--tetrahydrofolate ligase family.

It catalyses the reaction (6S)-5,6,7,8-tetrahydrofolate + formate + ATP = (6R)-10-formyltetrahydrofolate + ADP + phosphate. It functions in the pathway one-carbon metabolism; tetrahydrofolate interconversion. In Streptococcus pneumoniae serotype 4 (strain ATCC BAA-334 / TIGR4), this protein is Formate--tetrahydrofolate ligase.